A 67-amino-acid chain; its full sequence is Sec-independent protein translocase protein TatA (67 aa).

The helical transmembrane segment at 1–21 (MFGIGIQELLVVLVLVLLVFG) threads the bilayer. A disordered region spans residues 46 to 67 (PDEIDITPGKKNGKTDKDDKQA). The segment covering 58–67 (GKTDKDDKQA) has biased composition (basic and acidic residues).

Belongs to the TatA/E family. The Tat system comprises two distinct complexes: a TatABC complex, containing multiple copies of TatA, TatB and TatC subunits, and a separate TatA complex, containing only TatA subunits. Substrates initially bind to the TatABC complex, which probably triggers association of the separate TatA complex to form the active translocon.

The protein localises to the cell inner membrane. Its function is as follows. Part of the twin-arginine translocation (Tat) system that transports large folded proteins containing a characteristic twin-arginine motif in their signal peptide across membranes. TatA could form the protein-conducting channel of the Tat system. This is Sec-independent protein translocase protein TatA from Nitratidesulfovibrio vulgaris (strain DSM 19637 / Miyazaki F) (Desulfovibrio vulgaris).